We begin with the raw amino-acid sequence, 105 residues long: Cysteine-rich venom protein VAR2 (105 aa).

A signal peptide spans 1–22 (MILLKLYLTLAAILCQSRGTTS).

The protein belongs to the CRISP family. In terms of processing, contains 8 disulfide bonds. As to expression, expressed by the venom gland.

The protein localises to the secreted. Its function is as follows. Blocks ryanodine receptors, and potassium channels. The sequence is that of Cysteine-rich venom protein VAR2 from Varanus acanthurus (Ridge-tailed monitor).